We begin with the raw amino-acid sequence, 125 residues long: UPF0231 protein APL_0968 (125 aa).

The protein belongs to the UPF0231 family.

In Actinobacillus pleuropneumoniae serotype 5b (strain L20), this protein is UPF0231 protein APL_0968.